We begin with the raw amino-acid sequence, 249 residues long: tRNA (guanine-N(1)-)-methyltransferase (249 aa).

Residues Gly-112 and 132 to 137 each bind S-adenosyl-L-methionine; that span reads LGDFVL.

This sequence belongs to the RNA methyltransferase TrmD family. As to quaternary structure, homodimer.

The protein resides in the cytoplasm. It catalyses the reaction guanosine(37) in tRNA + S-adenosyl-L-methionine = N(1)-methylguanosine(37) in tRNA + S-adenosyl-L-homocysteine + H(+). In terms of biological role, specifically methylates guanosine-37 in various tRNAs. This is tRNA (guanine-N(1)-)-methyltransferase from Geobacter sp. (strain M21).